The following is a 590-amino-acid chain: (-)-alpha-terpineol synthase (590 aa).

Mg(2+) contacts are provided by aspartate 339, aspartate 343, aspartate 483, threonine 487, and glutamate 491. The DDXXD motif signature appears at 339 to 343; sequence DDVYD.

This sequence belongs to the terpene synthase family. Requires Mg(2+) as cofactor.

The enzyme catalyses (2E)-geranyl diphosphate + H2O = (S)-alpha-terpineol + diphosphate. The protein operates within secondary metabolite biosynthesis; terpenoid biosynthesis. In terms of biological role, mediates the conversion of geranyl diphosphate into alpha-terpineol, a monoterpenol. Monoterpenols contribute to the final grape and wine aroma and flavor. Also forms some 1,8-cineole and traces of other monoterpenoids. This chain is (-)-alpha-terpineol synthase, found in Vitis vinifera (Grape).